Consider the following 584-residue polypeptide: MKDYDDVILRPEASELSKTEFCNPAFDPEAGPSCPPPALQRDVGSRLQAPWHAQRLRGLQPDCHFSWFCILLLSGLLLLLLGLLVAVILAQLQATSLPRTTKNPLLTRGLTPMGVIPSTTPNTTTTTTTTTPARTGQQEAAMSPTHQTTCGGLLPGPSGFFSSPNYPDLYPPLSHCVWHIQVAAGQTIQLKIQALSIESMLTCLFDRLEIISEPTGPLLRVCGKTPPATLNTNTSHLRVSFVSDNDVEGSGFQAWYQAVAPGHWSCAHNEFHCDLLLCLKRDSVCDGITECADGSDEANCSAKTLGCGGNLTGLYGVFSTPNYPQHYPHQQLCTWYIEVPVGYGIRLEFHNFSLEAQAECKFDYVEVYEASNLGTFSFLGRFCGAEPPLNVVSSMHQLAVIFKTDLGISSGGFLATYQAINTTESGCPWAEFCQSGGYRDLQWMCDLWKDCANDSNDNCSSHLSPQPDLTCEPVQVEMCLGLSYNTTAFPNIWVGLATQTEVTDILRGYKSLTSLPCYQTFQRFLCGLLVPRCTSLGTILPPCRSVCQAAEQQCQSSLALLGTPWPFNCNRLPVAASLEACSQP.

Residues 1–69 (MKDYDDVILR…QPDCHFSWFC (69 aa)) lie on the Cytoplasmic side of the membrane. A helical; Signal-anchor for type II membrane protein transmembrane segment spans residues 70 to 90 (ILLLSGLLLLLLGLLVAVILA). Topologically, residues 91-584 (QLQATSLPRT…AASLEACSQP (494 aa)) are extracellular. Residues 108-140 (RGLTPMGVIPSTTPNTTTTTTTTTPARTGQQEA) form a disordered region. The segment covering 119-132 (TTPNTTTTTTTTTP) has biased composition (low complexity). 2 disulfide bridges follow: Cys-150–Cys-176 and Cys-203–Cys-222. One can recognise a CUB 1 domain in the interval 150-259 (CGGLLPGPSG…SGFQAWYQAV (110 aa)). N-linked (GlcNAc...) asparagine glycosylation occurs at Asn-233. One can recognise an LDL-receptor class A 1 domain in the interval 265 to 301 (SCAHNEFHCDLLLCLKRDSVCDGITECADGSDEANCS). 5 cysteine pairs are disulfide-bonded: Cys-266–Cys-278, Cys-273–Cys-291, Cys-285–Cys-300, Cys-307–Cys-333, and Cys-360–Cys-383. Positions 307-420 (CGGNLTGLYG…GGFLATYQAI (114 aa)) constitute a CUB 2 domain. N-linked (GlcNAc...) asparagine glycosylation is present at Asn-421. The 35-residue stretch at 426-460 (GCPWAEFCQSGGYRDLQWMCDLWKDCANDSNDNCS) folds into the LDL-receptor class A 2 domain. 7 disulfide bridges follow: Cys-433/Cys-451, Cys-445/Cys-459, Cys-471/Cys-533, Cys-479/Cys-526, Cys-517/Cys-554, Cys-543/Cys-581, and Cys-547/Cys-569. N-linked (GlcNAc...) asparagine glycosylation occurs at Asn-458. The region spanning 466–584 (QPDLTCEPVQ…AASLEACSQP (119 aa)) is the FZ domain.

Interacts with C1QTNF5. In terms of tissue distribution, expressed in retinal pigment epithelium and ciliary epithelium of the eye.

It localises to the apical cell membrane. May play a role in eye development. The sequence is that of Membrane frizzled-related protein (Mfrp) from Mus musculus (Mouse).